The sequence spans 657 residues: Conserved oligomeric Golgi complex subunit 6 (657 aa).

The segment covering 14-26 (SGAANGLSNGAGA) has biased composition (low complexity). The disordered stretch occupies residues 14-36 (SGAANGLSNGAGATPAQPNNPLS).

It belongs to the COG6 family. Component of the conserved oligomeric Golgi complex which is composed of eight different subunits and is required for normal Golgi morphology and localization.

It is found in the golgi apparatus membrane. Functionally, required for normal Golgi function. In Rattus norvegicus (Rat), this protein is Conserved oligomeric Golgi complex subunit 6 (Cog6).